A 189-amino-acid polypeptide reads, in one-letter code: Recombination protein RecR (189 aa).

Residues 48–63 form a C4-type zinc finger; the sequence is CQTCFHLSAEPLCDIC. The region spanning 71 to 165 is the Toprim domain; it reads QLLCVVADSR…QVSRIAYGLP (95 aa).

The protein belongs to the RecR family.

Its function is as follows. May play a role in DNA repair. It seems to be involved in an RecBC-independent recombinational process of DNA repair. It may act with RecF and RecO. This chain is Recombination protein RecR, found in Prochlorococcus marinus (strain MIT 9303).